A 175-amino-acid chain; its full sequence is RNA pyrophosphohydrolase (175 aa).

The region spanning 6 to 149 (GYRPNVGIVI…KRDVYRRVMK (144 aa)) is the Nudix hydrolase domain. The Nudix box signature appears at 38–59 (GGINPGETPEQAMYRELFEEVG).

The protein belongs to the Nudix hydrolase family. RppH subfamily. Requires a divalent metal cation as cofactor.

Functionally, accelerates the degradation of transcripts by removing pyrophosphate from the 5'-end of triphosphorylated RNA, leading to a more labile monophosphorylated state that can stimulate subsequent ribonuclease cleavage. The polypeptide is RNA pyrophosphohydrolase (Yersinia enterocolitica serotype O:8 / biotype 1B (strain NCTC 13174 / 8081)).